The following is a 256-amino-acid chain: UPF0246 protein HCH_04801 (256 aa).

The protein belongs to the UPF0246 family.

The sequence is that of UPF0246 protein HCH_04801 from Hahella chejuensis (strain KCTC 2396).